The following is a 458-amino-acid chain: BPI fold-containing family B member 2 (458 aa).

The N-terminal stretch at 1-20 (MAWASRLGLLLALLLPVVGA) is a signal peptide. Position 52 is a phosphothreonine; by FAM20C (Thr-52). Residue Ser-60 is modified to Phosphoserine; by FAM20C. 4 N-linked (GlcNAc...) asparagine glycosylation sites follow: Asn-96, Asn-151, Asn-293, and Asn-332. Cys-137 and Cys-174 form a disulfide bridge.

The protein belongs to the BPI/LBP/Plunc superfamily. BPI/LBP family. In terms of tissue distribution, highly expressed in tonsils, especially in hypertrophic tonsils. Detected at very low levels in fetal liver.

It is found in the secreted. This Homo sapiens (Human) protein is BPI fold-containing family B member 2 (BPIFB2).